The following is a 558-amino-acid chain: Membrane protein insertase YidC (558 aa).

The next 5 membrane-spanning stretches (helical) occupy residues 3-23 (IKRT…FDNW), 364-384 (FVGN…AVFF), 438-458 (LPVV…LASV), 477-497 (PYFI…KLNP), and 508-528 (MMFM…GLVL).

Belongs to the OXA1/ALB3/YidC family. Type 1 subfamily. Interacts with the Sec translocase complex via SecD. Specifically interacts with transmembrane segments of nascent integral membrane proteins during membrane integration.

The protein resides in the cell inner membrane. Its function is as follows. Required for the insertion and/or proper folding and/or complex formation of integral membrane proteins into the membrane. Involved in integration of membrane proteins that insert both dependently and independently of the Sec translocase complex, as well as at least some lipoproteins. Aids folding of multispanning membrane proteins. This is Membrane protein insertase YidC from Burkholderia pseudomallei (strain K96243).